The following is a 262-amino-acid chain: Acyl-[acyl-carrier-protein]--UDP-N-acetylglucosamine O-acyltransferase (262 aa).

Belongs to the transferase hexapeptide repeat family. LpxA subfamily. As to quaternary structure, homotrimer.

The protein localises to the cytoplasm. It catalyses the reaction a (3R)-hydroxyacyl-[ACP] + UDP-N-acetyl-alpha-D-glucosamine = a UDP-3-O-[(3R)-3-hydroxyacyl]-N-acetyl-alpha-D-glucosamine + holo-[ACP]. It participates in glycolipid biosynthesis; lipid IV(A) biosynthesis; lipid IV(A) from (3R)-3-hydroxytetradecanoyl-[acyl-carrier-protein] and UDP-N-acetyl-alpha-D-glucosamine: step 1/6. Its function is as follows. Involved in the biosynthesis of lipid A, a phosphorylated glycolipid that anchors the lipopolysaccharide to the outer membrane of the cell. This is Acyl-[acyl-carrier-protein]--UDP-N-acetylglucosamine O-acyltransferase from Burkholderia thailandensis (strain ATCC 700388 / DSM 13276 / CCUG 48851 / CIP 106301 / E264).